The primary structure comprises 234 residues: Enolase-phosphatase E1 (234 aa).

Residues D13 and E15 each contribute to the Mg(2+) site. Substrate contacts are provided by residues 127–128 (SS) and K164. Residue D191 participates in Mg(2+) binding.

Belongs to the HAD-like hydrolase superfamily. MasA/MtnC family. As to quaternary structure, monomer. Mg(2+) is required as a cofactor.

It is found in the cytoplasm. Its subcellular location is the nucleus. It catalyses the reaction 5-methylsulfanyl-2,3-dioxopentyl phosphate + H2O = 1,2-dihydroxy-5-(methylsulfanyl)pent-1-en-3-one + phosphate. It participates in amino-acid biosynthesis; L-methionine biosynthesis via salvage pathway; L-methionine from S-methyl-5-thio-alpha-D-ribose 1-phosphate: step 3/6. The protein operates within amino-acid biosynthesis; L-methionine biosynthesis via salvage pathway; L-methionine from S-methyl-5-thio-alpha-D-ribose 1-phosphate: step 4/6. Its function is as follows. Bifunctional enzyme that catalyzes the enolization of 2,3-diketo-5-methylthiopentyl-1-phosphate (DK-MTP-1-P) into the intermediate 2-hydroxy-3-keto-5-methylthiopentenyl-1-phosphate (HK-MTPenyl-1-P), which is then dephosphorylated to form the acireductone 1,2-dihydroxy-3-keto-5-methylthiopentene (DHK-MTPene). The chain is Enolase-phosphatase E1 from Podospora anserina (strain S / ATCC MYA-4624 / DSM 980 / FGSC 10383) (Pleurage anserina).